Here is a 327-residue protein sequence, read N- to C-terminus: Lipoyl synthase (327 aa).

Positions 66, 71, 77, 92, 96, 99, and 306 each coordinate [4Fe-4S] cluster. One can recognise a Radical SAM core domain in the interval 78–295; sequence FSKGTATFMI…EKEAYELGFS (218 aa).

The protein belongs to the radical SAM superfamily. Lipoyl synthase family. It depends on [4Fe-4S] cluster as a cofactor.

It localises to the cytoplasm. It catalyses the reaction [[Fe-S] cluster scaffold protein carrying a second [4Fe-4S](2+) cluster] + N(6)-octanoyl-L-lysyl-[protein] + 2 oxidized [2Fe-2S]-[ferredoxin] + 2 S-adenosyl-L-methionine + 4 H(+) = [[Fe-S] cluster scaffold protein] + N(6)-[(R)-dihydrolipoyl]-L-lysyl-[protein] + 4 Fe(3+) + 2 hydrogen sulfide + 2 5'-deoxyadenosine + 2 L-methionine + 2 reduced [2Fe-2S]-[ferredoxin]. It functions in the pathway protein modification; protein lipoylation via endogenous pathway; protein N(6)-(lipoyl)lysine from octanoyl-[acyl-carrier-protein]: step 2/2. Catalyzes the radical-mediated insertion of two sulfur atoms into the C-6 and C-8 positions of the octanoyl moiety bound to the lipoyl domains of lipoate-dependent enzymes, thereby converting the octanoylated domains into lipoylated derivatives. This chain is Lipoyl synthase, found in Neisseria meningitidis serogroup A / serotype 4A (strain DSM 15465 / Z2491).